The chain runs to 92 residues: MYIYKSFIYSEVINMALATKVKEFLEEKLKQEKIDRKYLAQVTNIPYTTVSRIMRAEANREFNPEIDTILKIAKYFNCTMDEVIKRKVHNNS.

An HTH cro/C1-type domain is found at 25–83 (LEEKLKQEKIDRKYLAQVTNIPYTTVSRIMRAEANREFNPEIDTILKIAKYFNCTMDEV). Positions 36–55 (RKYLAQVTNIPYTTVSRIMR) form a DNA-binding region, H-T-H motif.

This is an uncharacterized protein from Rickettsia prowazekii (strain Madrid E).